Consider the following 545-residue polypeptide: Cytochrome P450 monooxygenase sdnB (545 aa).

An N-linked (GlcNAc...) asparagine glycan is attached at N5. A helical transmembrane segment spans residues 30–50 (SILALTPLQGIALFLCLFWGY). Residue N276 is glycosylated (N-linked (GlcNAc...) asparagine). Residues 322 to 342 (LPILILIILVPAAHTTAMGIS) traverse the membrane as a helical segment. N393 and N476 each carry an N-linked (GlcNAc...) asparagine glycan. Position 486 (C486) interacts with heme.

Belongs to the cytochrome P450 family. The cofactor is heme.

The protein localises to the membrane. Its pathway is antibiotic biosynthesis. Its function is as follows. Cytochrome P450 monooxygenase; part of the gene cluster that mediates the biosynthesis of sordarin and hypoxysordarin, glycoside antibiotics with a unique tetracyclic diterpene aglycone structure. First, the geranylgeranyl diphosphate synthase sdnC constructs GGDP from farnesyl diphosphate and isopentenyl diphosphate. The diterpene cyclase sdnA then catalyzes the cyclization of GGDP to afford cycloaraneosene. Cycloaraneosene is then hydroxylated four times by the putative cytochrome P450 monooxygenases sdnB, sdnE, sdnF and sdnH to give a hydroxylated cycloaraneosene derivative such as cycloaraneosene-8,9,13,19-tetraol. Although the order of the hydroxylations is unclear, at least C8, C9 and C13 of the cycloaraneosene skeleton are hydroxylated before the sordaricin formation. Dehydration of the 13-hydroxy group of the hydroxylated cycloaraneosene derivative might be catalyzed by an unassigned hypothetical protein such as sdnG and sdnP to construct the cyclopentadiene moiety. The FAD-dependent oxidoreductase sdnN is proposed to catalyze the oxidation at C9 of the hydroxylated cycloaraneosene derivative and also catalyze the Baeyer-Villiger oxidation to give the lactone intermediate. The presumed lactone intermediate would be hydrolyzed to give an acrolein moiety and a carboxylate moiety. Then, [4+2]cycloaddition would occur between the acrolein moiety and the cyclopentadiene moiety to give sordaricin. SdnN might also be involved in the [4+2]cycloaddition after the hypothesized oxidation to accommodate the oxidized product and prompt the [4+2]cycloaddition. GDP-6-deoxy-D-altrose may be biosynthesized from GDP-D-mannose by the putative GDP-mannose-4,6-dehydratase sdnI and the short-chain dehydrogenase sdnK. The glycosyltransferase sdnJ catalyzes the attachment of 6-deoxy-D-altrose onto the 19-hydroxy group of sordaricin to give 4'-O-demethylsordarin. The methyltransferase sdnD would complete the biosynthesis of sordarin. Sordarin can be further modified into hypoxysordarin. The unique acyl chain at the 3'-hydroxy group of hypoxysordarin would be constructed by an iterative type I PKS sdnO and the trans-acting polyketide methyltransferase sdnL. SdnL would be responsible for the introduction of an alpha-methyl group of the polyketide chain. Alternatively, the beta-lactamase-like protein sdnR might be responsible for the cleavage and transfer of the polyketide chain from the PKS sdnO to sordarin. Two putative cytochrome P450 monooxygenases, sdnQ and sdnT, might catalyze the epoxidations of the polyketide chain to complete the biosynthesis of hypoxysordarin. Transcriptional regulators sdnM and sdnS are presumably encoded for the transcriptional regulation of the expression of the sdn gene cluster. The polypeptide is Cytochrome P450 monooxygenase sdnB (Sordaria araneosa (Pleurage araneosa)).